Here is a 380-residue protein sequence, read N- to C-terminus: Acyl-coenzyme A diphosphatase SCS3 (380 aa).

Topologically, residues 1–7 (MSSKWFN) are cytoplasmic. A helical transmembrane segment spans residues 8–28 (AIHLLVCPLTVLVGYLMNAYG). Residues 29-43 (YGAALQATLNKDGLV) lie on the Lumenal side of the membrane. A helical membrane pass occupies residues 44-64 (NAMLVKKGWFWTSLVGWWCII). Residues 65–88 (RYRAVPGATGRDRRHIVQSFKRYA) are Cytoplasmic-facing. Residues 89–109 (ILTVWWYVFTQGIWFGVGPIM) traverse the membrane as a helical segment. Over 110 to 233 (DLVFVYTGGH…GHWAGGHDPS (124 aa)) the chain is Lumenal. The chain crosses the membrane as a helical span at residues 234–254 (GHVFLATLMCMFLLGELRVFG). Histidine 235 is a catalytic residue. Topologically, residues 255–325 (RRALAHLYAQ…LTRCIACDHP (71 aa)) are cytoplasmic. The chain crosses the membrane as a helical span at residues 326-346 (VIILLTLLVTWLWQLLLTAVA). The Lumenal segment spans residues 347–356 (SRFHTVREHM). Residue histidine 350 is part of the active site. The chain crosses the membrane as a helical span at residues 357-377 (SGLLAAYIVTGLVYARDAAAL). Topologically, residues 378–380 (RPV) are cytoplasmic.

Belongs to the FIT family. Fungal FIT2B/SCS3 subfamily.

The protein resides in the endoplasmic reticulum membrane. It catalyses the reaction an acyl-CoA + H2O = an acyl-4'-phosphopantetheine + adenosine 3',5'-bisphosphate + 2 H(+). It carries out the reaction (9Z)-octadecenoyl-CoA + H2O = S-(9Z-octadecenoyl)-4'-phosphopantetheine + adenosine 3',5'-bisphosphate + 2 H(+). The catalysed reaction is (5Z,8Z,11Z,14Z)-eicosatetraenoyl-CoA + H2O = S-(5Z,8Z,11Z,14Z-eicosatetraenoyl)-4'-phosphopantetheine + adenosine 3',5'-bisphosphate + 2 H(+). The enzyme catalyses hexadecanoyl-CoA + H2O = S-hexadecanoyl-4'-phosphopantetheine + adenosine 3',5'-bisphosphate + 2 H(+). In terms of biological role, fatty acyl-coenzyme A (CoA) diphosphatase that hydrolyzes fatty acyl-CoA to yield acyl-4'-phosphopantetheine and adenosine 3',5'-bisphosphate. Preferentially hydrolyzes unsaturated long-chain acyl-CoA substrates in the endoplasmic reticulum (ER) lumen. This catalytic activity is required for maintaining ER structure and for lipid droplets (LDs) biogenesis, which are lipid storage organelles involved in maintaining lipid and energy homeostasis. May directly bind to diacylglycerol (DAGs) and triacylglycerol, which is also important for LD biogenesis. May support directional budding of nacent LDs from the ER into the cytosol by reducing DAG levels at sites of LD formation. May play a role in the regulation of cell morphology and cytoskeletal organization. Involved in phospholipid biosynthesis. This is Acyl-coenzyme A diphosphatase SCS3 from Saccharomyces cerevisiae (strain ATCC 204508 / S288c) (Baker's yeast).